We begin with the raw amino-acid sequence, 215 residues long: MPEATPFQVMIVDDHPLMRRGVRQLLELDPGSEVVAEAGDGASAIDLANRLDIDVILLDLNMKGMSGLDTLNALRRDGVTAQIIILTVSDASSDVFALIDAGADGYLLKDSDPEVLLEAIRAGAKGSKVFSERVNQYLREREMFGAEEDPFSVLTERELDVLHELAQGLSNKQIASVLNISEQTVKVHIRNLLRKLNVRSRVAATILFLQQRGAQ.

A Response regulatory domain is found at 8-124 (QVMIVDDHPL…VLLEAIRAGA (117 aa)). The residue at position 59 (aspartate 59) is a 4-aspartylphosphate. The region spanning 147-212 (EEDPFSVLTE…AATILFLQQR (66 aa)) is the HTH luxR-type domain. A DNA-binding region (H-T-H motif) is located at residues 171–190 (NKQIASVLNISEQTVKVHIR).

This protein activates the expression of the nitrate reductase (narGHJI) and formate dehydrogenase-N (fdnGHI) operons and represses the transcription of the fumarate reductase (frdABCD) operon in response to a nitrate/nitrite induction signal transmitted by either the NarX or NarQ proteins. The chain is Nitrate/nitrite response regulator protein NarP (narP) from Escherichia coli (strain K12).